The following is a 157-amino-acid chain: ATP synthase subunit b 1 (157 aa).

Residues 7–29 traverse the membrane as a helical segment; the sequence is LFGQMVTFALLVWFTMKYVWPPL.

It belongs to the ATPase B chain family. In terms of assembly, F-type ATPases have 2 components, F(1) - the catalytic core - and F(0) - the membrane proton channel. F(1) has five subunits: alpha(3), beta(3), gamma(1), delta(1), epsilon(1). F(0) has three main subunits: a(1), b(2) and c(10-14). The alpha and beta chains form an alternating ring which encloses part of the gamma chain. F(1) is attached to F(0) by a central stalk formed by the gamma and epsilon chains, while a peripheral stalk is formed by the delta and b chains.

The protein localises to the cell inner membrane. Its function is as follows. F(1)F(0) ATP synthase produces ATP from ADP in the presence of a proton or sodium gradient. F-type ATPases consist of two structural domains, F(1) containing the extramembraneous catalytic core and F(0) containing the membrane proton channel, linked together by a central stalk and a peripheral stalk. During catalysis, ATP synthesis in the catalytic domain of F(1) is coupled via a rotary mechanism of the central stalk subunits to proton translocation. Component of the F(0) channel, it forms part of the peripheral stalk, linking F(1) to F(0). This chain is ATP synthase subunit b 1, found in Methylococcus capsulatus (strain ATCC 33009 / NCIMB 11132 / Bath).